Here is a 203-residue protein sequence, read N- to C-terminus: A-type ATP synthase subunit E (203 aa).

Belongs to the V-ATPase E subunit family. In terms of assembly, might form a homodimer. Interacts with subunit H via residues 41-60. The A-type ATPase is composed of subunits A(3), B(3), C, D, E(1 or 2), F, H(2), I and K(x).

The protein resides in the cell membrane. Component of the A-type ATP synthase that produces ATP from ADP in the presence of a proton gradient across the membrane. This Methanocaldococcus jannaschii (strain ATCC 43067 / DSM 2661 / JAL-1 / JCM 10045 / NBRC 100440) (Methanococcus jannaschii) protein is A-type ATP synthase subunit E.